Consider the following 1188-residue polypeptide: DNA-directed RNA polymerase subunit beta (1188 aa).

Belongs to the RNA polymerase beta chain family. In terms of assembly, the RNAP catalytic core consists of 2 alpha, 1 beta, 1 beta' and 1 omega subunit. When a sigma factor is associated with the core the holoenzyme is formed, which can initiate transcription.

The catalysed reaction is RNA(n) + a ribonucleoside 5'-triphosphate = RNA(n+1) + diphosphate. Functionally, DNA-dependent RNA polymerase catalyzes the transcription of DNA into RNA using the four ribonucleoside triphosphates as substrates. In Streptococcus equi subsp. equi (strain 4047), this protein is DNA-directed RNA polymerase subunit beta.